The sequence spans 210 residues: Redox-sensing transcriptional repressor Rex (210 aa).

Positions 17–56 (KYYRYLAELMDNDVDRISSKELSEKIGFTASQIRQDLNNF) form a DNA-binding region, H-T-H motif. 91-96 (GAGNIG) contacts NAD(+).

This sequence belongs to the transcriptional regulatory Rex family. In terms of assembly, homodimer.

The protein resides in the cytoplasm. Its function is as follows. Modulates transcription in response to changes in cellular NADH/NAD(+) redox state. This is Redox-sensing transcriptional repressor Rex from Clostridium novyi (strain NT).